The sequence spans 874 residues: DNA primase (874 aa).

The CHC2-type zinc finger occupies 786–824 (CLRHTHRASSKNVRVFLVLYYTSQAITVTFMSQCFAGRC). A compositionally biased stretch (polar residues) spans 848 to 857 (ASQDSTTSQL). Residues 848 to 874 (ASQDSTTSQLARRRDRQDGSFSETLPN) are disordered.

Belongs to the herpesviridae DNA primase family. As to quaternary structure, associates with the helicase and the primase-associated factor to form the helicase-primase factor.

It is found in the host nucleus. Essential component of the helicase/primase complex. Unwinds the DNA at the replication forks and generates single-stranded DNA for both leading and lagging strand synthesis. The primase initiates primer synthesis and thereby produces large amount of short RNA primers on the lagging strand that the polymerase elongates using dNTPs. The chain is DNA primase from Epstein-Barr virus (strain B95-8) (HHV-4).